The chain runs to 914 residues: Serine/threonine kinase SAD-1 (914 aa).

One can recognise a Protein kinase domain in the interval 47–298; the sequence is YKLEKTLGKG…LADVFKHPWV (252 aa). Residues 53–61 and K76 contribute to the ATP site; that span reads LGKGQTGLV. D169 (proton acceptor) is an active-site residue. Disordered regions lie at residues 375–551, 563–590, and 757–914; these read AQED…SPPS, TMNS…SGPW, and NSTQ…ADKV. The segment covering 393–402 has biased composition (basic and acidic residues); the sequence is PPKKRTDSSR. The segment covering 444 to 462 has biased composition (low complexity); it reads RSSTRDLFGSSSSGSYSAR. Over residues 473–482 the composition is skewed to polar residues; it reads ASRSTNSYHY. Residues 495 to 526 are compositionally biased toward basic and acidic residues; the sequence is AARHVRDAQERRESRDSGRGSSRKESKDRSDK. Composition is skewed to low complexity over residues 527-551 and 563-573; these read SASS…SPPS and TMNSTNSSTNS. A compositionally biased stretch (polar residues) spans 574–590; that stretch reads LIAGNSQTSIGSTSGPW. A compositionally biased stretch (low complexity) spans 780-796; that stretch reads DSSVGSACSDSESNASS. The segment covering 823–837 has biased composition (polar residues); the sequence is SMRSVGSGTANSYKS. The segment covering 850-876 has biased composition (low complexity); the sequence is ASSSSASNRYGPSSSSSGSYSNNADYS. The segment covering 882 to 903 has biased composition (polar residues); it reads SQRSNGSSAPKNQYSPGSQRSF.

This sequence belongs to the protein kinase superfamily. CAMK Ser/Thr protein kinase family. SNF1 subfamily. Interacts with strd-1 and nab-1. Mg(2+) is required as a cofactor. In terms of tissue distribution, expressed in neurons. Colocalizes with strd-1 along the dorsal nerve cord.

It localises to the synapse. The enzyme catalyses L-seryl-[protein] + ATP = O-phospho-L-seryl-[protein] + ADP + H(+). The catalysed reaction is L-threonyl-[protein] + ATP = O-phospho-L-threonyl-[protein] + ADP + H(+). Regulates both neuronal polarity and synaptic organization when bound to strd-1. Kinase activity is required for the establishment, but not the maintenance, of both processes. Binding to nab-1 is essential for role in restricting axonal fate during neuronal polarization but is not required for regulating synapse morphology. This is Serine/threonine kinase SAD-1 from Caenorhabditis elegans.